The sequence spans 240 residues: Insulin-like growth factor-binding protein 3 receptor (240 aa).

The first 38 residues, 1–38 (MGSCQAGHNLHLCLAHHPPLVCATLILLLLGLSGLGLG), serve as a signal peptide directing secretion. The Extracellular segment spans residues 39–204 (GFLLTHTTGL…SEELALCGSR (166 aa)). The N-linked (GlcNAc...) asparagine glycan is linked to asparagine 167. The helical transmembrane segment at 205-225 (VLGLGFFLVLLCGLLCCTTAV) threads the bilayer. The Cytoplasmic portion of the chain corresponds to 226–240 (CFHPRPEFHWSRTRL).

In terms of assembly, interacts with IGFBP3. Interacts with CASP8.

Its subcellular location is the cell membrane. Cell death receptor specific for IGFBP3, may mediate caspase-8-dependent apoptosis upon ligand binding. The polypeptide is Insulin-like growth factor-binding protein 3 receptor (Tmem219) (Mus musculus (Mouse)).